The chain runs to 275 residues: Phosphonates import ATP-binding protein PhnC (275 aa).

Residues 2–246 (LKIENLTKRY…ALTEIYGEEE (245 aa)) enclose the ABC transporter domain. 35–42 (GPSGAGKS) provides a ligand contact to ATP.

Belongs to the ABC transporter superfamily. Phosphonates importer (TC 3.A.1.9.1) family. The complex is composed of two ATP-binding proteins (PhnC), two transmembrane proteins (PhnE) and a solute-binding protein (PhnD).

The protein localises to the cell inner membrane. The catalysed reaction is phosphonate(out) + ATP + H2O = phosphonate(in) + ADP + phosphate + H(+). Part of the ABC transporter complex PhnCDE involved in phosphonates import. Responsible for energy coupling to the transport system. The chain is Phosphonates import ATP-binding protein PhnC from Wolinella succinogenes (strain ATCC 29543 / DSM 1740 / CCUG 13145 / JCM 31913 / LMG 7466 / NCTC 11488 / FDC 602W) (Vibrio succinogenes).